The primary structure comprises 1264 residues: P-type sodium-transporting ATPase4 (1264 aa).

Polar residues predominate over residues 1–12 (MSSQNNNKQGGQ). The disordered stretch occupies residues 1–102 (MSSQNNNKQG…INGEKNDDNN (102 aa)). Basic and acidic residues-rich tracts occupy residues 15 to 42 (NNKK…DELN) and 50 to 64 (NDMK…KKNE). A run of 8 helical transmembrane segments spans residues 165–185 (VWLI…LVAA), 186–206 (VASL…IVTL), 359–379 (GLIG…AVII), 393–413 (FVII…GLPM), 923–943 (FVCF…VAIV), 1006–1026 (IFEA…CTGF), 1203–1223 (CSIS…TSIL), and 1226–1246 (TCLL…NLFL).

The protein belongs to the cation transport ATPase (P-type) (TC 3.A.3) family.

It localises to the cell membrane. It catalyses the reaction Na(+)(in) + ATP + H2O = Na(+)(out) + ADP + phosphate + H(+). Its activity is regulated as follows. Inhibited by cipargamin and other spiroindolone compounds. Inhibited by 4-cyano-3-methylisoquinoline derivatives MB14 and MB10 but not RK18. Inhibited by (+)-SJ733, a dihydroisoquinolone compound. Its function is as follows. Sodium-exporting ATPase. Required for the extrusion of Na(+) from the intraerythrocytic parasites to maintain a low cytosolic concentration of Na(+). The protein is P-type sodium-transporting ATPase4 of Plasmodium falciparum (isolate 3D7).